Reading from the N-terminus, the 509-residue chain is Maturase K (509 aa).

Belongs to the intron maturase 2 family. MatK subfamily.

It localises to the plastid. It is found in the chloroplast. Functionally, usually encoded in the trnK tRNA gene intron. Probably assists in splicing its own and other chloroplast group II introns. The sequence is that of Maturase K from Nicotiana glutinosa (Tobacco).